A 180-amino-acid polypeptide reads, in one-letter code: Large ribosomal subunit protein uL5 (180 aa).

This sequence belongs to the universal ribosomal protein uL5 family. As to quaternary structure, part of the 50S ribosomal subunit; part of the 5S rRNA/L5/L18/L25 subcomplex. Contacts the 5S rRNA and the P site tRNA. Forms a bridge to the 30S subunit in the 70S ribosome.

This is one of the proteins that bind and probably mediate the attachment of the 5S RNA into the large ribosomal subunit, where it forms part of the central protuberance. In the 70S ribosome it contacts protein S13 of the 30S subunit (bridge B1b), connecting the 2 subunits; this bridge is implicated in subunit movement. Contacts the P site tRNA; the 5S rRNA and some of its associated proteins might help stabilize positioning of ribosome-bound tRNAs. This is Large ribosomal subunit protein uL5 from Latilactobacillus sakei subsp. sakei (strain 23K) (Lactobacillus sakei subsp. sakei).